A 331-amino-acid polypeptide reads, in one-letter code: Ketol-acid reductoisomerase (NADP(+)) (331 aa).

Residues 4–183 form the KARI N-terminal Rossmann domain; it reads ATIYYDDDAE…GCTRAGVVET (180 aa). Residues 27-30, Arg-50, Ser-53, Ser-55, and 85-88 contribute to the NADP(+) site; these read YGSQ and DTVQ. His-109 is an active-site residue. An NADP(+)-binding site is contributed by Gly-135. Positions 184 to 329 constitute a KARI C-terminal knotted domain; sequence TFREETETDL…EDLRALFAWG (146 aa). Asp-192, Glu-196, Glu-228, and Glu-232 together coordinate Mg(2+). Ser-253 serves as a coordination point for substrate.

This sequence belongs to the ketol-acid reductoisomerase family. Mg(2+) serves as cofactor.

It carries out the reaction (2R)-2,3-dihydroxy-3-methylbutanoate + NADP(+) = (2S)-2-acetolactate + NADPH + H(+). The enzyme catalyses (2R,3R)-2,3-dihydroxy-3-methylpentanoate + NADP(+) = (S)-2-ethyl-2-hydroxy-3-oxobutanoate + NADPH + H(+). It functions in the pathway amino-acid biosynthesis; L-isoleucine biosynthesis; L-isoleucine from 2-oxobutanoate: step 2/4. Its pathway is amino-acid biosynthesis; L-valine biosynthesis; L-valine from pyruvate: step 2/4. Functionally, involved in the biosynthesis of branched-chain amino acids (BCAA). Catalyzes an alkyl-migration followed by a ketol-acid reduction of (S)-2-acetolactate (S2AL) to yield (R)-2,3-dihydroxy-isovalerate. In the isomerase reaction, S2AL is rearranged via a Mg-dependent methyl migration to produce 3-hydroxy-3-methyl-2-ketobutyrate (HMKB). In the reductase reaction, this 2-ketoacid undergoes a metal-dependent reduction by NADPH to yield (R)-2,3-dihydroxy-isovalerate. This Natronomonas pharaonis (strain ATCC 35678 / DSM 2160 / CIP 103997 / JCM 8858 / NBRC 14720 / NCIMB 2260 / Gabara) (Halobacterium pharaonis) protein is Ketol-acid reductoisomerase (NADP(+)).